Reading from the N-terminus, the 460-residue chain is Bifunctional protein GlmU (460 aa).

The interval 1 to 229 is pyrophosphorylase; the sequence is MTNYAIILAA…FNESLGVNDR (229 aa). UDP-N-acetyl-alpha-D-glucosamine contacts are provided by residues 8–11, Lys-22, Gln-72, and 77–78; these read LAAG and GT. Asp-102 contributes to the Mg(2+) binding site. Positions 139, 154, 169, and 227 each coordinate UDP-N-acetyl-alpha-D-glucosamine. A Mg(2+)-binding site is contributed by Asn-227. Positions 230 to 250 are linker; sequence VALATAETVMRQRITQKHMVN. Residues 251–460 are N-acetyltransferase; that stretch reads GVTFHNPETV…RLAHHPSRSK (210 aa). UDP-N-acetyl-alpha-D-glucosamine-binding residues include Arg-332 and Lys-350. His-362 serves as the catalytic Proton acceptor. UDP-N-acetyl-alpha-D-glucosamine-binding residues include Tyr-365 and Asn-376. Acetyl-CoA contacts are provided by residues Ala-379, 385–386, Ser-404, Ala-422, and Arg-439; that span reads NY.

It in the N-terminal section; belongs to the N-acetylglucosamine-1-phosphate uridyltransferase family. In the C-terminal section; belongs to the transferase hexapeptide repeat family. In terms of assembly, homotrimer. The cofactor is Mg(2+).

The protein localises to the cytoplasm. It catalyses the reaction alpha-D-glucosamine 1-phosphate + acetyl-CoA = N-acetyl-alpha-D-glucosamine 1-phosphate + CoA + H(+). It carries out the reaction N-acetyl-alpha-D-glucosamine 1-phosphate + UTP + H(+) = UDP-N-acetyl-alpha-D-glucosamine + diphosphate. It functions in the pathway nucleotide-sugar biosynthesis; UDP-N-acetyl-alpha-D-glucosamine biosynthesis; N-acetyl-alpha-D-glucosamine 1-phosphate from alpha-D-glucosamine 6-phosphate (route II): step 2/2. It participates in nucleotide-sugar biosynthesis; UDP-N-acetyl-alpha-D-glucosamine biosynthesis; UDP-N-acetyl-alpha-D-glucosamine from N-acetyl-alpha-D-glucosamine 1-phosphate: step 1/1. Its pathway is bacterial outer membrane biogenesis; LPS lipid A biosynthesis. Catalyzes the last two sequential reactions in the de novo biosynthetic pathway for UDP-N-acetylglucosamine (UDP-GlcNAc). The C-terminal domain catalyzes the transfer of acetyl group from acetyl coenzyme A to glucosamine-1-phosphate (GlcN-1-P) to produce N-acetylglucosamine-1-phosphate (GlcNAc-1-P), which is converted into UDP-GlcNAc by the transfer of uridine 5-monophosphate (from uridine 5-triphosphate), a reaction catalyzed by the N-terminal domain. The polypeptide is Bifunctional protein GlmU (Streptococcus pyogenes serotype M49 (strain NZ131)).